The following is a 258-amino-acid chain: Imidazole glycerol phosphate synthase subunit HisF (258 aa).

Active-site residues include D11 and D130.

Belongs to the HisA/HisF family. Heterodimer of HisH and HisF.

The protein localises to the cytoplasm. It catalyses the reaction 5-[(5-phospho-1-deoxy-D-ribulos-1-ylimino)methylamino]-1-(5-phospho-beta-D-ribosyl)imidazole-4-carboxamide + L-glutamine = D-erythro-1-(imidazol-4-yl)glycerol 3-phosphate + 5-amino-1-(5-phospho-beta-D-ribosyl)imidazole-4-carboxamide + L-glutamate + H(+). The protein operates within amino-acid biosynthesis; L-histidine biosynthesis; L-histidine from 5-phospho-alpha-D-ribose 1-diphosphate: step 5/9. IGPS catalyzes the conversion of PRFAR and glutamine to IGP, AICAR and glutamate. The HisF subunit catalyzes the cyclization activity that produces IGP and AICAR from PRFAR using the ammonia provided by the HisH subunit. The chain is Imidazole glycerol phosphate synthase subunit HisF from Lachnoclostridium phytofermentans (strain ATCC 700394 / DSM 18823 / ISDg) (Clostridium phytofermentans).